The sequence spans 468 residues: H(+)/Cl(-) exchange transporter ClcA (468 aa).

The Cytoplasmic segment spans residues 1–30; it reads MSTRETFKISLLAKMPKDVINQFLSKDKTP. Residues 31–67 form a helical membrane-spanning segment; the sequence is FSVLFLSLLVGILAGLVGTYFEQAVHLVSETRTDWLK. Over 68–74 the chain is Periplasmic; it reads SEIGSFL. Residues 75-98 traverse the membrane as a helical segment; the sequence is PLWLAAFLISAFLAFIGYFLVHRF. Positions 104–108 match the Selectivity filter part_1 motif; that stretch reads GSGIP. Ser105 contributes to the chloride binding site. Positions 107 to 114 form an intramembrane region, helical; it reads IPEIEGAM. Residues 115–121 lie on the Cytoplasmic side of the membrane; it reads DGMRPVR. The next 2 helical transmembrane spans lie at 122–139 and 146–164; these read WWRV…ALGS and EGPT…SDIF. A Selectivity filter part_2 motif is present at residues 144-148; it reads GREGP. Residues 165 to 174 are Cytoplasmic-facing; sequence RVKNEDTRHS. 2 consecutive intramembrane regions (helical) follow at residues 175 to 187 and 191 to 199; these read LLAA…LAAA and PLAGIMFVI. The Cytoplasmic segment spans residues 200 to 212; it reads EEMRPQFRYTLIS. A helical transmembrane segment spans residues 213–230; it reads VRAVIISAVAANIVFRVI. Over 231 to 250 the chain is Periplasmic; the sequence is NGQDAVITMPQYDAPELSTL. Residues 251-279 form a helical membrane-spanning segment; the sequence is GLFLLLGALFGVFGVLFNYLITLAQDLFV. Topologically, residues 280–285 are cytoplasmic; that stretch reads KFHRND. Residues 286–307 form a helical membrane-spanning segment; the sequence is RKRYLLTGSMIGGCFGLLLLYV. The Periplasmic segment spans residues 308-327; sequence PELTGGGISLIPTITNGGYG. 2 helical membrane-spanning segments follow: residues 328-347 and 353-374; these read AGIL…LCFG and GIFA…LIAK. The Selectivity filter part_3 signature appears at 353 to 357; sequence GIFAP. Residues Ile354 and Phe355 each contribute to the chloride site. The Periplasmic segment spans residues 375–384; that stretch reads MWFPELNIEP. The helical intramembrane region spans 385–399; sequence GMFAIAGMGALFAAT. Positions 400–402 form an intramembrane region, note=Loop between two helices; that stretch reads VRA. Residues 403 to 414 constitute an intramembrane region (helical); that stretch reads PITGILLVIEMT. The note=Loop between two helices intramembrane region spans 415–419; the sequence is NNYHL. Residues 420 to 436 traverse the membrane as a helical segment; that stretch reads ILPLIITSLGAVIFAQL. The Cytoplasmic portion of the chain corresponds to 437 to 468; that stretch reads LGGQPIYSQLLHRTLKNQKLQQQDLPPQSPNS. Tyr443 contributes to the chloride binding site.

The protein belongs to the chloride channel (TC 2.A.49) family. ClcA subfamily. As to quaternary structure, homodimer.

The protein resides in the cell inner membrane. The catalysed reaction is 2 chloride(in) + H(+)(out) = 2 chloride(out) + H(+)(in). Its function is as follows. Proton-coupled chloride transporter. Functions as antiport system and exchanges two chloride ions for 1 proton. Probably acts as an electrical shunt for an outwardly-directed proton pump that is linked to amino acid decarboxylation, as part of the extreme acid resistance (XAR) response. This Vibrio cholerae serotype O1 (strain ATCC 39315 / El Tor Inaba N16961) protein is H(+)/Cl(-) exchange transporter ClcA.